Here is a 46-residue protein sequence, read N- to C-terminus: Photosystem II reaction center protein K (46 aa).

Positions 1 to 9 (MTTLALVLA) are excised as a propeptide. The helical transmembrane segment at 18–38 (FAPIVDVLPVIPVFFILLAFV) threads the bilayer.

Belongs to the PsbK family. PSII is composed of 1 copy each of membrane proteins PsbA, PsbB, PsbC, PsbD, PsbE, PsbF, PsbH, PsbI, PsbJ, PsbK, PsbL, PsbM, PsbT, PsbX, PsbY, PsbZ, Psb30/Ycf12, at least 3 peripheral proteins of the oxygen-evolving complex and a large number of cofactors. It forms dimeric complexes. This protein is tightly associated with CP43 (psbC), one of the core proteins.

The protein localises to the plastid. The protein resides in the chloroplast thylakoid membrane. Functionally, one of the components of the core complex of photosystem II (PSII). PSII is a light-driven water:plastoquinone oxidoreductase that uses light energy to abstract electrons from H(2)O, generating O(2) and a proton gradient subsequently used for ATP formation. It consists of a core antenna complex that captures photons, and an electron transfer chain that converts photonic excitation into a charge separation. Required for assembly and/or stability of PSII. The chain is Photosystem II reaction center protein K from Chlamydomonas reinhardtii (Chlamydomonas smithii).